The following is an 803-amino-acid chain: Leucine--tRNA ligase (803 aa).

The short motif at 40–51 is the 'HIGH' region element; sequence PYPSGAGLHVGH. A 'KMSKS' region motif is present at residues 575 to 579; that stretch reads KMSKS. Position 578 (lysine 578) interacts with ATP.

The protein belongs to the class-I aminoacyl-tRNA synthetase family.

It is found in the cytoplasm. The catalysed reaction is tRNA(Leu) + L-leucine + ATP = L-leucyl-tRNA(Leu) + AMP + diphosphate. This is Leucine--tRNA ligase from Listeria monocytogenes serovar 1/2a (strain ATCC BAA-679 / EGD-e).